The primary structure comprises 325 residues: MLLDRIGFYFPKALSNFLILYTCCICFSRIDILPRIVNVVLLITLSSFALYTYWKIIRVGAGSPLEYSFLKIQSIDNVLNRTEQPPDIIKDNCIFVKRDGSFRFCQTCEIWKPDRCHHCSKCNKCFLKMDHHCPWFASCVGFRNQKFFVQFLAYTTVYSLYVLLMTSAQLYSWFRQMKYKSELLDLHLLVVWVLSVIAAIATFAFTTYTIWLVTKNETTIEQYEWGNIRHDLEIYGDSINCNMGSVDNVFDLGSRSANFNCVMGASWAELLLPIQVRADDPFDPYANQGLFFPVQSDTYRIYRESVNLQQRLITRLTLRPSIEHI.

Over 1 to 5 (MLLDR) the chain is Cytoplasmic. A helical membrane pass occupies residues 6-26 (IGFYFPKALSNFLILYTCCIC). At 27-35 (FSRIDILPR) the chain is on the lumenal side. A helical transmembrane segment spans residues 36–56 (IVNVVLLITLSSFALYTYWKI). At 57 to 146 (IRVGAGSPLE…ASCVGFRNQK (90 aa)) the chain is on the cytoplasmic side. The region spanning 103 to 153 (RFCQTCEIWKPDRCHHCSKCNKCFLKMDHHCPWFASCVGFRNQKFFVQFLA) is the DHHC domain. Residues 147 to 167 (FFVQFLAYTTVYSLYVLLMTS) form a helical membrane-spanning segment. Over 168–185 (AQLYSWFRQMKYKSELLD) the chain is Lumenal. A helical transmembrane segment spans residues 186-206 (LHLLVVWVLSVIAAIATFAFT). The Cytoplasmic segment spans residues 207 to 325 (TYTIWLVTKN…LTLRPSIEHI (119 aa)).

The protein belongs to the DHHC palmitoyltransferase family. PFA3 subfamily. Autopalmitoylated.

The protein localises to the vacuole membrane. The enzyme catalyses L-cysteinyl-[protein] + hexadecanoyl-CoA = S-hexadecanoyl-L-cysteinyl-[protein] + CoA. In terms of biological role, palmitoyltransferase specific for VAC8. Palmitoylates VAC8 at one or more of its N-terminal cysteine residues, which is required for its proper membrane localization. The chain is Palmitoyltransferase PFA3 (PFA3) from Kluyveromyces lactis (strain ATCC 8585 / CBS 2359 / DSM 70799 / NBRC 1267 / NRRL Y-1140 / WM37) (Yeast).